The sequence spans 389 residues: Oxysterol-binding protein 1 (389 aa).

Coiled coils occupy residues 1–31 (MGKK…NKPA) and 340–371 (KDDV…DEWK). The segment at 1-43 (MGKKDKNVSVEEEVDEAEIEKLAAENANKPAPQLTKEDLDAMD) is disordered.

This sequence belongs to the OSBP family. Interacts with dstC.

Its subcellular location is the cytoplasm. In terms of biological role, may play a role in the regulation of the slug-fruiting body switch. This Dictyostelium discoideum (Social amoeba) protein is Oxysterol-binding protein 1 (osbA).